The following is a 197-amino-acid chain: Cell division protein SepF (197 aa).

2 disordered regions span residues 38–72 (MPTPLPEESAPAPRRLPENPTVASNFAMNSNTTPT) and 164–197 (LSREETPATPAAPARPAAPAPAWSDEMTPMAQAQ). Over residues 58–72 (TVASNFAMNSNTTPT) the composition is skewed to polar residues. Residues 170 to 185 (PATPAAPARPAAPAPA) are compositionally biased toward low complexity.

It belongs to the SepF family. Homodimer. Interacts with FtsZ.

The protein localises to the cytoplasm. Functionally, cell division protein that is part of the divisome complex and is recruited early to the Z-ring. Probably stimulates Z-ring formation, perhaps through the cross-linking of FtsZ protofilaments. Its function overlaps with FtsA. The sequence is that of Cell division protein SepF from Picosynechococcus sp. (strain ATCC 27264 / PCC 7002 / PR-6) (Agmenellum quadruplicatum).